The chain runs to 145 residues: Small ribosomal subunit protein uS12 (145 aa).

This sequence belongs to the universal ribosomal protein uS12 family. Part of the 30S ribosomal subunit.

With S4 and S5 plays an important role in translational accuracy. Located at the interface of the 30S and 50S subunits. In Cenarchaeum symbiosum (strain A), this protein is Small ribosomal subunit protein uS12.